A 138-amino-acid chain; its full sequence is Transcription antitermination protein NusB (138 aa).

The protein belongs to the NusB family.

Functionally, involved in transcription antitermination. Required for transcription of ribosomal RNA (rRNA) genes. Binds specifically to the boxA antiterminator sequence of the ribosomal RNA (rrn) operons. This chain is Transcription antitermination protein NusB, found in Alkaliphilus oremlandii (strain OhILAs) (Clostridium oremlandii (strain OhILAs)).